The chain runs to 833 residues: Multiphosphoryl transfer protein 2 (833 aa).

The region spanning 2–91 (ALIVEFICEL…QWLRDEFPHC (90 aa)) is the HPr domain. H16 acts as the Tele-phosphohistidine intermediate; for HPr activity in catalysis. H16 bears the Phosphohistidine; by EI mark. A PTS EI region spans residues 143–653 (LGNLPAAKGV…AAKARMAQLD (511 aa)). The active-site Tele-phosphohistidine intermediate; for PTS EI activity is the H301. H301 is subject to Phosphohistidine; by autocatalysis. Phosphoenolpyruvate contacts are provided by R408 and R444. Positions 543 and 567 each coordinate Mg(2+). Residues 566–567 (ND) and R577 each bind phosphoenolpyruvate. The Proton donor; for EI activity role is filled by C614. The 143-residue stretch at 688 to 830 (PLVTAECITL…DAIASLLQHE (143 aa)) folds into the PTS EIIA type-2 domain. The active-site Tele-phosphohistidine intermediate; for PTS EIIA activity is H750. H750 is modified (phosphohistidine; by HPr).

It belongs to the PEP-utilizing enzyme family. Mg(2+) serves as cofactor.

The protein localises to the cytoplasm. The catalysed reaction is L-histidyl-[protein] + phosphoenolpyruvate = N(pros)-phospho-L-histidyl-[protein] + pyruvate. The enzyme catalyses D-fructose(out) + N(pros)-phospho-L-histidyl-[protein] = D-fructose 1-phosphate(in) + L-histidyl-[protein]. Multifunctional protein that includes general (non sugar-specific) and sugar-specific components of the phosphoenolpyruvate-dependent sugar phosphotransferase system (sugar PTS). This major carbohydrate active transport system catalyzes the phosphorylation of incoming sugar substrates concomitantly with their translocation across the cell membrane. The enzyme II FrwABC PTS system is involved in fructose transport. In Escherichia coli (strain K12), this protein is Multiphosphoryl transfer protein 2.